The sequence spans 210 residues: MADS-box protein AGL42 (210 aa).

One can recognise an MADS-box domain in the interval 1–61; sequence MVRGKIEMKK…GRLYEFSSSD (61 aa). The K-box domain occupies 87–177; sequence LQQLKQEASH…HQKNVINPWR (91 aa).

In terms of tissue distribution, expressed in quiescent center (QC) cells of root tips. Expressed at the base of the petiole of cotyledons and leaves, in flower buds, petals, sepals and abscission zone of flowers and siliques.

It localises to the nucleus. In terms of biological role, MADS-box transcription factor that acts with AGL71 and AGL72 in the control of flowering time. Promotes flowering at the shoot apical and axillary meristems. Seems to act through a gibberellin-dependent pathway. Interacts genetically with SOC1 and its expression is directly regulated by SOC1. Plays a role in controlling flower organ senescence and abscission by repressing ethylene responses and regulating the expression of BOP2 and IDA. The protein is MADS-box protein AGL42 (AGL42) of Arabidopsis thaliana (Mouse-ear cress).